The sequence spans 335 residues: Fructokinase-2 (335 aa).

Belongs to the carbohydrate kinase PfkB family. In terms of tissue distribution, expressed in roots, at higher levels in stems, and hardly detectable in leaves.

It catalyses the reaction D-fructose + ATP = D-fructose 6-phosphate + ADP + H(+). The protein operates within glycan biosynthesis; starch biosynthesis. Its activity is regulated as follows. Inhibited at high fructose. Its function is as follows. May play an important role in maintaining the flux of carbon towards starch formation. May also be involved in a sugar-sensing pathway. This is Fructokinase-2 (FRK2) from Zea mays (Maize).